The sequence spans 655 residues: p-hydroxybenzoic acid efflux pump subunit AaeB (655 aa).

The next 11 membrane-spanning stretches (helical) occupy residues 13–33 (FAVK…HFQL), 38–58 (WAVL…GGEP), 69–89 (LRII…ISMI), 93–113 (LLMI…SSLV), 121–141 (WGLS…EPLL), 152–172 (EIVI…PRSI), 370–390 (LFWL…IAVV), 407–427 (FIYG…VIIP), 431–451 (QSML…GIEV), 459–479 (MGAL…TFHF), and 482–502 (FLDS…VILL).

Belongs to the aromatic acid exporter ArAE (TC 2.A.85) family.

The protein resides in the cell inner membrane. Forms an efflux pump with AaeA. Could function as a metabolic relief valve, allowing to eliminate certain compounds when they accumulate to high levels in the cell. In Salmonella enteritidis PT4 (strain P125109), this protein is p-hydroxybenzoic acid efflux pump subunit AaeB.